A 156-amino-acid polypeptide reads, in one-letter code: Transcription elongation factor GreA (156 aa).

Residues 1–32 (MKKVRLTREGYEKLKKELEDLKRKFMYEISER) are a coiled coil.

This sequence belongs to the GreA/GreB family.

Its function is as follows. Necessary for efficient RNA polymerase transcription elongation past template-encoded arresting sites. The arresting sites in DNA have the property of trapping a certain fraction of elongating RNA polymerases that pass through, resulting in locked ternary complexes. Cleavage of the nascent transcript by cleavage factors such as GreA or GreB allows the resumption of elongation from the new 3'terminus. GreA releases sequences of 2 to 3 nucleotides. This Thermotoga maritima (strain ATCC 43589 / DSM 3109 / JCM 10099 / NBRC 100826 / MSB8) protein is Transcription elongation factor GreA.